The primary structure comprises 392 residues: NADH-quinone oxidoreductase subunit D 1 (392 aa).

The protein belongs to the complex I 49 kDa subunit family. NDH-1 is composed of 14 different subunits. Subunits NuoB, C, D, E, F, and G constitute the peripheral sector of the complex.

It is found in the cell inner membrane. It carries out the reaction a quinone + NADH + 5 H(+)(in) = a quinol + NAD(+) + 4 H(+)(out). Functionally, NDH-1 shuttles electrons from NADH, via FMN and iron-sulfur (Fe-S) centers, to quinones in the respiratory chain. The immediate electron acceptor for the enzyme in this species is believed to be a menaquinone. Couples the redox reaction to proton translocation (for every two electrons transferred, four hydrogen ions are translocated across the cytoplasmic membrane), and thus conserves the redox energy in a proton gradient. In Cytophaga hutchinsonii (strain ATCC 33406 / DSM 1761 / CIP 103989 / NBRC 15051 / NCIMB 9469 / D465), this protein is NADH-quinone oxidoreductase subunit D 1.